A 641-amino-acid chain; its full sequence is Chaperone protein DnaK 2 (641 aa).

T199 carries the post-translational modification Phosphothreonine; by autocatalysis. Residues 601–616 (MAQQQAQAQHAQSSQQ) show a composition bias toward low complexity. The interval 601–641 (MAQQQAQAQHAQSSQQTNDTTGQSSTDDDVFEAEFEEVKDK) is disordered. Positions 626–635 (TDDDVFEAEF) are enriched in acidic residues.

This sequence belongs to the heat shock protein 70 family.

Its function is as follows. Acts as a chaperone. This Photobacterium profundum (strain SS9) protein is Chaperone protein DnaK 2.